Consider the following 323-residue polypeptide: Beta-ketoacyl-[acyl-carrier-protein] synthase III (323 aa).

Active-site residues include Cys-113 and His-250. An ACP-binding region spans residues 251 to 255; it reads QANKR. The active site involves Asn-280.

It belongs to the thiolase-like superfamily. FabH family. In terms of assembly, homodimer.

The protein localises to the cytoplasm. The enzyme catalyses malonyl-[ACP] + acetyl-CoA + H(+) = 3-oxobutanoyl-[ACP] + CO2 + CoA. Its pathway is lipid metabolism; fatty acid biosynthesis. In terms of biological role, catalyzes the condensation reaction of fatty acid synthesis by the addition to an acyl acceptor of two carbons from malonyl-ACP. Catalyzes the first condensation reaction which initiates fatty acid synthesis and may therefore play a role in governing the total rate of fatty acid production. Possesses both acetoacetyl-ACP synthase and acetyl transacylase activities. Its substrate specificity determines the biosynthesis of branched-chain and/or straight-chain of fatty acids. The polypeptide is Beta-ketoacyl-[acyl-carrier-protein] synthase III (Mesorhizobium japonicum (strain LMG 29417 / CECT 9101 / MAFF 303099) (Mesorhizobium loti (strain MAFF 303099))).